The chain runs to 242 residues: uncharacterized protein (242 aa).

The 114-residue stretch at 3–116 (TALVIDDEPF…RLRKTVKRLS (114 aa)) folds into the Response regulatory domain. Aspartate 54 bears the 4-aspartylphosphate mark. In terms of domain architecture, HTH LytTR-type spans 139-240 (IPCIGHNRIV…LKLLKEMLGL (102 aa)).

This is an uncharacterized protein from Vibrio vulnificus (strain CMCP6).